Here is a 394-residue protein sequence, read N- to C-terminus: Elongation factor Tu (394 aa).

Positions 10–205 (KPHMNVGTIG…TMDNYFDLPQ (196 aa)) constitute a tr-type G domain. The interval 19-26 (GHVDHGKT) is G1. 19-26 (GHVDHGKT) provides a ligand contact to GTP. T26 serves as a coordination point for Mg(2+). The interval 61–65 (GITIN) is G2. The interval 82–85 (DCPG) is G3. GTP is bound by residues 82 to 86 (DCPGH) and 137 to 140 (NKLD). The interval 137 to 140 (NKLD) is G4. The interval 173–175 (SAF) is G5.

The protein belongs to the TRAFAC class translation factor GTPase superfamily. Classic translation factor GTPase family. EF-Tu/EF-1A subfamily. Monomer.

The protein localises to the cytoplasm. It catalyses the reaction GTP + H2O = GDP + phosphate + H(+). Its function is as follows. GTP hydrolase that promotes the GTP-dependent binding of aminoacyl-tRNA to the A-site of ribosomes during protein biosynthesis. This chain is Elongation factor Tu, found in Borrelia turicatae (strain 91E135).